The chain runs to 479 residues: Kynurenine 3-monooxygenase (479 aa).

FAD contacts are provided by residues Val19, 37–40 (YEAR), and Ala57. L-kynurenine contacts are provided by Arg85 and Tyr99. Residues Arg111, Leu136, Thr172, Asp304, and 317 to 318 (MN) each bind FAD. L-kynurenine contacts are provided by Asn363 and Tyr398. Helical transmembrane passes span 385 to 404 (FLHA…VAFT) and 425 to 445 (GLFV…VHHL).

Belongs to the aromatic-ring hydroxylase family. KMO subfamily. FAD serves as cofactor. In terms of tissue distribution, expressed by organs containing secondary lymphoid tissue, such as the lung, spleen, mesenteric lymph node, thymus and peripheral lymph nodes.

It localises to the mitochondrion outer membrane. It carries out the reaction L-kynurenine + NADPH + O2 + H(+) = 3-hydroxy-L-kynurenine + NADP(+) + H2O. It participates in cofactor biosynthesis; NAD(+) biosynthesis; quinolinate from L-kynurenine: step 1/3. In terms of biological role, catalyzes the hydroxylation of L-kynurenine (L-Kyn) to form 3-hydroxy-L-kynurenine (L-3OHKyn). Required for synthesis of quinolinic acid, a neurotoxic NMDA receptor antagonist and potential endogenous inhibitor of NMDA receptor signaling in axonal targeting, synaptogenesis and apoptosis during brain development. Quinolinic acid may also affect NMDA receptor signaling in pancreatic beta cells, osteoblasts, myocardial cells, and the gastrointestinal tract. The chain is Kynurenine 3-monooxygenase from Mus musculus (Mouse).